The sequence spans 180 residues: Decaprenylphosphoryl-5-phosphoribose phosphatase (180 aa).

The next 4 helical transmembrane spans lie at Ala-31–Leu-51, Leu-61–Val-81, Val-116–Leu-136, and Leu-139–Val-159.

The protein belongs to the PA-phosphatase related phosphoesterase family.

It is found in the cell membrane. It catalyses the reaction trans,octa-cis-decaprenylphospho-beta-D-ribofuranose 5-phosphate + H2O = trans,octa-cis-decaprenylphospho-beta-D-ribofuranose + phosphate. It participates in cell wall biogenesis; cell wall polysaccharide biosynthesis. Phosphatase involved in the biosynthesis of decaprenylphosphoryl arabinose (DPA), which serves as the arabinose donor for the biosynthesis of arabinogalactan, the major mycobacterial cell wall polysaccharide. Catalyzes the dephosphorylation of decaprenylphosphoryl-5-phosphoribose (DPPR) to decaprenyl-phosphoribose (DPR). This Mycolicibacterium smegmatis (strain ATCC 700084 / mc(2)155) (Mycobacterium smegmatis) protein is Decaprenylphosphoryl-5-phosphoribose phosphatase.